The chain runs to 292 residues: NAD kinase (292 aa).

Asp-73 functions as the Proton acceptor in the catalytic mechanism. NAD(+) contacts are provided by residues 73 to 74 (DG), 147 to 148 (NE), His-158, Arg-175, Asp-177, 188 to 193 (TGYSLS), and Gln-247.

The protein belongs to the NAD kinase family. A divalent metal cation is required as a cofactor.

The protein resides in the cytoplasm. The catalysed reaction is NAD(+) + ATP = ADP + NADP(+) + H(+). Its function is as follows. Involved in the regulation of the intracellular balance of NAD and NADP, and is a key enzyme in the biosynthesis of NADP. Catalyzes specifically the phosphorylation on 2'-hydroxyl of the adenosine moiety of NAD to yield NADP. The sequence is that of NAD kinase from Buchnera aphidicola subsp. Schizaphis graminum (strain Sg).